The chain runs to 674 residues: tRNA 5-methylaminomethyl-2-thiouridine biosynthesis bifunctional protein MnmC (674 aa).

Residues 1 to 237 (MLTSYQLESP…KREMTVGELN (237 aa)) form a tRNA (mnm(5)s(2)U34)-methyltransferase region. Residues 270–674 (VGAGLAGANT…IRDLKRSQIL (405 aa)) form an FAD-dependent cmnm(5)s(2)U34 oxidoreductase region.

This sequence in the N-terminal section; belongs to the methyltransferase superfamily. tRNA (mnm(5)s(2)U34)-methyltransferase family. In the C-terminal section; belongs to the DAO family. FAD serves as cofactor.

The protein resides in the cytoplasm. It carries out the reaction 5-aminomethyl-2-thiouridine(34) in tRNA + S-adenosyl-L-methionine = 5-methylaminomethyl-2-thiouridine(34) in tRNA + S-adenosyl-L-homocysteine + H(+). Its function is as follows. Catalyzes the last two steps in the biosynthesis of 5-methylaminomethyl-2-thiouridine (mnm(5)s(2)U) at the wobble position (U34) in tRNA. Catalyzes the FAD-dependent demodification of cmnm(5)s(2)U34 to nm(5)s(2)U34, followed by the transfer of a methyl group from S-adenosyl-L-methionine to nm(5)s(2)U34, to form mnm(5)s(2)U34. This chain is tRNA 5-methylaminomethyl-2-thiouridine biosynthesis bifunctional protein MnmC, found in Marinomonas sp. (strain MWYL1).